The sequence spans 305 residues: MSFTDTPEGFRSGFISFVGRPNTGKSTLTNALVGEKIAITANQPETTRHPIRGIVHREDAQIIVVDTPGLHKPRTLLGERLNEVVKDTYADMDLIAITVPADEKIGPGDRWILDAVKKVAPKTPLLGIVTKVDKASRDQVAVQLMELHELLGGNSEVVPVSAVTGEQRDVLLDVITRLLPEGPKFYPDDHITDDDTETRLSELIREAALSGLKDELPHSVAVQIDEILPNDEREGVLDVHAVIYVERPGQKSILIGKDGRRLGRIIHNARPEIIKILGSNVYLDLRIKVLKNWQQDPKQLGRLGF.

One can recognise an Era-type G domain in the interval 11-181 (RSGFISFVGR…LDVITRLLPE (171 aa)). The interval 19–26 (GRPNTGKS) is G1. A GTP-binding site is contributed by 19–26 (GRPNTGKS). Positions 45–49 (ETTRH) are G2. Residues 66-69 (DTPG) form a G3 region. GTP-binding positions include 66–70 (DTPGL) and 130–133 (TKVD). A G4 region spans residues 130–133 (TKVD). The interval 160 to 162 (VSA) is G5. Residues 212 to 291 (LKDELPHSVA…YLDLRIKVLK (80 aa)) enclose the KH type-2 domain.

This sequence belongs to the TRAFAC class TrmE-Era-EngA-EngB-Septin-like GTPase superfamily. Era GTPase family. In terms of assembly, monomer.

Its subcellular location is the cytoplasm. The protein resides in the cell membrane. In terms of biological role, an essential GTPase that binds both GDP and GTP, with rapid nucleotide exchange. Plays a role in 16S rRNA processing and 30S ribosomal subunit biogenesis and possibly also in cell cycle regulation and energy metabolism. In Corynebacterium diphtheriae (strain ATCC 700971 / NCTC 13129 / Biotype gravis), this protein is GTPase Era.